Reading from the N-terminus, the 75-residue chain is Protein SlyX homolog (75 aa).

The protein belongs to the SlyX family.

The sequence is that of Protein SlyX homolog from Chromobacterium violaceum (strain ATCC 12472 / DSM 30191 / JCM 1249 / CCUG 213 / NBRC 12614 / NCIMB 9131 / NCTC 9757 / MK).